Here is a 432-residue protein sequence, read N- to C-terminus: Glutamyl-tRNA reductase (432 aa).

Residues 49-52 (TCNR), serine 109, 114-116 (EGQ), and glutamine 120 each bind substrate. Cysteine 50 functions as the Nucleophile in the catalytic mechanism. 189–194 (GAGKMS) serves as a coordination point for NADP(+).

Belongs to the glutamyl-tRNA reductase family. As to quaternary structure, homodimer.

Its subcellular location is the plastid. It is found in the cyanelle. The enzyme catalyses (S)-4-amino-5-oxopentanoate + tRNA(Glu) + NADP(+) = L-glutamyl-tRNA(Glu) + NADPH + H(+). Its pathway is porphyrin-containing compound metabolism; protoporphyrin-IX biosynthesis; 5-aminolevulinate from L-glutamyl-tRNA(Glu): step 1/2. It participates in porphyrin-containing compound metabolism; chlorophyll biosynthesis. Catalyzes the NADPH-dependent reduction of glutamyl-tRNA(Glu) to glutamate 1-semialdehyde (GSA). The sequence is that of Glutamyl-tRNA reductase from Cyanophora paradoxa.